A 354-amino-acid chain; its full sequence is Phosphate acyltransferase (354 aa).

It belongs to the PlsX family. As to quaternary structure, homodimer. Probably interacts with PlsY.

Its subcellular location is the cytoplasm. The catalysed reaction is a fatty acyl-[ACP] + phosphate = an acyl phosphate + holo-[ACP]. It participates in lipid metabolism; phospholipid metabolism. Functionally, catalyzes the reversible formation of acyl-phosphate (acyl-PO(4)) from acyl-[acyl-carrier-protein] (acyl-ACP). This enzyme utilizes acyl-ACP as fatty acyl donor, but not acyl-CoA. This Bordetella petrii (strain ATCC BAA-461 / DSM 12804 / CCUG 43448) protein is Phosphate acyltransferase.